The chain runs to 452 residues: Trigger factor (452 aa).

In terms of domain architecture, PPIase FKBP-type spans 171-256 (GDRVTLAFKG…ATLIEAPQDA (86 aa)).

This sequence belongs to the FKBP-type PPIase family. Tig subfamily.

Its subcellular location is the cytoplasm. The enzyme catalyses [protein]-peptidylproline (omega=180) = [protein]-peptidylproline (omega=0). Involved in protein export. Acts as a chaperone by maintaining the newly synthesized protein in an open conformation. Functions as a peptidyl-prolyl cis-trans isomerase. The chain is Trigger factor from Afipia carboxidovorans (strain ATCC 49405 / DSM 1227 / KCTC 32145 / OM5) (Oligotropha carboxidovorans).